The primary structure comprises 388 residues: Probable proton-coupled zinc antiporter SLC30A3 (388 aa).

Residues Met1 to Thr13 show a composition bias toward polar residues. Disordered stretches follow at residues Met1–Leu30 and Thr35–His54. The Cytoplasmic portion of the chain corresponds to Met1–Gln75. A helical transmembrane segment spans residues Leu76 to Leu96. At Ala97–Asp105 the chain is on the lumenal side. Residues Ala106–Ser126 traverse the membrane as a helical segment. Positions 108 and 112 each coordinate Zn(2+). At Thr127 to Gly145 the chain is on the cytoplasmic side. Residues Ala146–Ile166 traverse the membrane as a helical segment. Residues Arg167–Gly177 are Lumenal-facing. The helical transmembrane segment at Gly178–Leu198 threads the bilayer. Residues His199–Ala235 lie on the Cytoplasmic side of the membrane. The helical transmembrane segment at Phe236 to Ile256 threads the bilayer. Zn(2+)-binding residues include His238 and Asp242. The Lumenal segment spans residues Tyr257–Ala264. A helical membrane pass occupies residues Ala265–Leu285. Over Arg286 to Ala388 the chain is Cytoplasmic.

The protein belongs to the cation diffusion facilitator (CDF) transporter (TC 2.A.4) family. SLC30A subfamily. In terms of assembly, homodimer. Homodimerization could regulate efficiency of zinc transport. Interacts with TMEM163.

The protein resides in the cytoplasmic vesicle. It is found in the secretory vesicle. Its subcellular location is the synaptic vesicle membrane. The protein localises to the synapse. It localises to the synaptosome. The protein resides in the late endosome membrane. It is found in the lysosome membrane. It catalyses the reaction Zn(2+)(in) + 2 H(+)(out) = Zn(2+)(out) + 2 H(+)(in). In terms of biological role, probable proton-coupled zinc ion antiporter mediating the import of zinc from cytoplasm into synaptic vesicles and participating to cellular zinc ion homeostasis in the brain. This chain is Probable proton-coupled zinc antiporter SLC30A3, found in Bos taurus (Bovine).